A 397-amino-acid chain; its full sequence is Acetate kinase (397 aa).

Residue asparagine 7 participates in Mg(2+) binding. Lysine 14 serves as a coordination point for ATP. Arginine 90 contributes to the substrate binding site. Aspartate 147 functions as the Proton donor/acceptor in the catalytic mechanism. ATP is bound by residues 207–211 (HLGNG), 282–284 (DFR), and 330–334 (GLGEN). Mg(2+) is bound at residue glutamate 383.

Belongs to the acetokinase family. In terms of assembly, homodimer. Requires Mg(2+) as cofactor. It depends on Mn(2+) as a cofactor.

The protein localises to the cytoplasm. It carries out the reaction acetate + ATP = acetyl phosphate + ADP. It participates in metabolic intermediate biosynthesis; acetyl-CoA biosynthesis; acetyl-CoA from acetate: step 1/2. Its function is as follows. Catalyzes the formation of acetyl phosphate from acetate and ATP. Can also catalyze the reverse reaction. This chain is Acetate kinase, found in Clostridium botulinum (strain 657 / Type Ba4).